The following is a 607-amino-acid chain: Elongation factor 4 (607 aa).

Residues 11–193 (SKIRNFSIIA…QIVEKVPAPA (183 aa)) enclose the tr-type G domain. Residues 23–28 (DHGKST) and 140–143 (NKID) contribute to the GTP site.

It belongs to the TRAFAC class translation factor GTPase superfamily. Classic translation factor GTPase family. LepA subfamily.

Its subcellular location is the cell membrane. The enzyme catalyses GTP + H2O = GDP + phosphate + H(+). In terms of biological role, required for accurate and efficient protein synthesis under certain stress conditions. May act as a fidelity factor of the translation reaction, by catalyzing a one-codon backward translocation of tRNAs on improperly translocated ribosomes. Back-translocation proceeds from a post-translocation (POST) complex to a pre-translocation (PRE) complex, thus giving elongation factor G a second chance to translocate the tRNAs correctly. Binds to ribosomes in a GTP-dependent manner. The protein is Elongation factor 4 of Bacillus cereus (strain ATCC 14579 / DSM 31 / CCUG 7414 / JCM 2152 / NBRC 15305 / NCIMB 9373 / NCTC 2599 / NRRL B-3711).